Consider the following 335-residue polypeptide: tRNA N6-adenosine threonylcarbamoyltransferase (335 aa).

Fe cation contacts are provided by histidine 112 and histidine 116. Substrate is bound by residues 134–138, aspartate 167, glycine 180, and asparagine 273; that span reads VVSGG. Aspartate 301 lines the Fe cation pocket.

It belongs to the KAE1 / TsaD family. Fe(2+) is required as a cofactor.

It localises to the cytoplasm. It carries out the reaction L-threonylcarbamoyladenylate + adenosine(37) in tRNA = N(6)-L-threonylcarbamoyladenosine(37) in tRNA + AMP + H(+). In terms of biological role, required for the formation of a threonylcarbamoyl group on adenosine at position 37 (t(6)A37) in tRNAs that read codons beginning with adenine. Is involved in the transfer of the threonylcarbamoyl moiety of threonylcarbamoyl-AMP (TC-AMP) to the N6 group of A37, together with TsaE and TsaB. TsaD likely plays a direct catalytic role in this reaction. The protein is tRNA N6-adenosine threonylcarbamoyltransferase of Shouchella clausii (strain KSM-K16) (Alkalihalobacillus clausii).